We begin with the raw amino-acid sequence, 523 residues long: GMP synthase [glutamine-hydrolyzing] (523 aa).

Residues 8 to 205 (KILILDFGSQ…VVNICGCETK (198 aa)) form the Glutamine amidotransferase type-1 domain. Cys-85 functions as the Nucleophile in the catalytic mechanism. Active-site residues include His-179 and Glu-181. The GMPS ATP-PPase domain occupies 206–398 (WTAENIIEDA…LGLPAEMINR (193 aa)). 233–239 (SGGVDSS) is a binding site for ATP.

In terms of assembly, homodimer.

The enzyme catalyses XMP + L-glutamine + ATP + H2O = GMP + L-glutamate + AMP + diphosphate + 2 H(+). The protein operates within purine metabolism; GMP biosynthesis; GMP from XMP (L-Gln route): step 1/1. Functionally, catalyzes the synthesis of GMP from XMP. In Haemophilus influenzae (strain PittGG), this protein is GMP synthase [glutamine-hydrolyzing].